We begin with the raw amino-acid sequence, 124 residues long: Small ribosomal subunit protein uS12 (124 aa).

The disordered stretch occupies residues 1 to 25; it reads MARINQLVRKPRRARAKKSDVPALE. Aspartate 89 is subject to 3-methylthioaspartic acid. The tract at residues 103–124 is disordered; sequence DTAGVSGRRRGRSKYGEKKPKE.

The protein belongs to the universal ribosomal protein uS12 family. As to quaternary structure, part of the 30S ribosomal subunit. Contacts proteins S8 and S17. May interact with IF1 in the 30S initiation complex.

Its function is as follows. With S4 and S5 plays an important role in translational accuracy. Interacts with and stabilizes bases of the 16S rRNA that are involved in tRNA selection in the A site and with the mRNA backbone. Located at the interface of the 30S and 50S subunits, it traverses the body of the 30S subunit contacting proteins on the other side and probably holding the rRNA structure together. The combined cluster of proteins S8, S12 and S17 appears to hold together the shoulder and platform of the 30S subunit. The sequence is that of Small ribosomal subunit protein uS12 from Coxiella burnetii (strain Dugway 5J108-111).